The chain runs to 427 residues: Serine--tRNA ligase (427 aa).

Residue 232–234 (TAE) coordinates L-serine. An ATP-binding site is contributed by 263–265 (RSE). Residue E286 coordinates L-serine. Position 350–353 (350–353 (EISS)) interacts with ATP. S385 provides a ligand contact to L-serine.

Belongs to the class-II aminoacyl-tRNA synthetase family. Type-1 seryl-tRNA synthetase subfamily. In terms of assembly, homodimer. The tRNA molecule binds across the dimer.

The protein resides in the cytoplasm. The enzyme catalyses tRNA(Ser) + L-serine + ATP = L-seryl-tRNA(Ser) + AMP + diphosphate + H(+). The catalysed reaction is tRNA(Sec) + L-serine + ATP = L-seryl-tRNA(Sec) + AMP + diphosphate + H(+). It participates in aminoacyl-tRNA biosynthesis; selenocysteinyl-tRNA(Sec) biosynthesis; L-seryl-tRNA(Sec) from L-serine and tRNA(Sec): step 1/1. Functionally, catalyzes the attachment of serine to tRNA(Ser). Is also able to aminoacylate tRNA(Sec) with serine, to form the misacylated tRNA L-seryl-tRNA(Sec), which will be further converted into selenocysteinyl-tRNA(Sec). This is Serine--tRNA ligase from Lacticaseibacillus paracasei (strain ATCC 334 / BCRC 17002 / CCUG 31169 / CIP 107868 / KCTC 3260 / NRRL B-441) (Lactobacillus paracasei).